A 211-amino-acid chain; its full sequence is Pyridoxine/pyridoxamine 5'-phosphate oxidase (211 aa).

Substrate contacts are provided by residues 7–10 (RREY) and Lys-65. FMN-binding positions include 60–65 (RIVLLK), 75–76 (FT), Lys-82, and Gln-104. 3 residues coordinate substrate: Tyr-122, Arg-126, and Ser-130. Residues 139-140 (QS) and Trp-184 each bind FMN. A substrate-binding site is contributed by 190 to 192 (RLH). Arg-194 contributes to the FMN binding site.

Belongs to the pyridoxamine 5'-phosphate oxidase family. In terms of assembly, homodimer. It depends on FMN as a cofactor.

The enzyme catalyses pyridoxamine 5'-phosphate + O2 + H2O = pyridoxal 5'-phosphate + H2O2 + NH4(+). It catalyses the reaction pyridoxine 5'-phosphate + O2 = pyridoxal 5'-phosphate + H2O2. It participates in cofactor metabolism; pyridoxal 5'-phosphate salvage; pyridoxal 5'-phosphate from pyridoxamine 5'-phosphate: step 1/1. It functions in the pathway cofactor metabolism; pyridoxal 5'-phosphate salvage; pyridoxal 5'-phosphate from pyridoxine 5'-phosphate: step 1/1. Catalyzes the oxidation of either pyridoxine 5'-phosphate (PNP) or pyridoxamine 5'-phosphate (PMP) into pyridoxal 5'-phosphate (PLP). This chain is Pyridoxine/pyridoxamine 5'-phosphate oxidase, found in Teredinibacter turnerae (strain ATCC 39867 / T7901).